Consider the following 173-residue polypeptide: Trafficking regulator of GLUT4 1 (173 aa).

Residues 1-10 show a composition bias toward pro residues; the sequence is MANPAQPPLQ. Residues 1 to 20 are disordered; sequence MANPAQPPLQDPGSTSPLEL. Residues 1–102 lie on the Cytoplasmic side of the membrane; sequence MANPAQPPLQ…QDQEAPKDYL (102 aa). Serine 16, serine 43, serine 45, serine 70, serine 84, and serine 85 each carry phosphoserine. The segment at residues 103–123 is an intramembrane region (helical); it reads VLAIASCFCPVWPLNLIPLIF. Residues 124 to 150 lie on the Cytoplasmic side of the membrane; sequence SIMSRSSVQQGDLDGARRLGRLARLLS. The chain crosses the membrane as a helical span at residues 151–171; sequence ITFIILGIVIIIVAVTVNFTV. Over 172 to 173 the chain is Extracellular; it reads PK.

Belongs to the CD225/Dispanin family. As to quaternary structure, interacts with SLC2A4; the interaction is required for proper SLC2A4 reacycling after insulin stimulation. Expressed specifically in white and brown adipose tissues.

Its subcellular location is the cell membrane. It is found in the endomembrane system. It localises to the cytoplasm. The protein resides in the perinuclear region. Its function is as follows. Regulates insulin-mediated adipose tissue glucose uptake and transport by modulation of SLC2A4 recycling. Not required for SLC2A4 membrane fusion upon an initial stimulus, but rather is necessary for proper protein recycling during prolonged insulin stimulation. This Mus musculus (Mouse) protein is Trafficking regulator of GLUT4 1 (Trarg1).